Here is a 278-residue protein sequence, read N- to C-terminus: Neuronal membrane glycoprotein M6-a (278 aa).

At methionine 1 the chain carries N-acetylmethionine. The Cytoplasmic segment spans residues 1-22 (MEENMEEGQTQKGCFECCIKCL). The chain crosses the membrane as a helical span at residues 23–43 (GGIPYASLIATILLYAGVALF). The Extracellular portion of the chain corresponds to 44–84 (CGCGHEALSGTVNILQTYFEMARTAGDTLDVFTMIDIFKYV). The helical transmembrane segment at 85–105 (IYGIAAAFFVYGILLMVEGFF) threads the bilayer. At 106–127 (TTGAIKDLYGDFKITTCGRCVS) the chain is on the cytoplasmic side. The chain crosses the membrane as a helical span at residues 128-148 (AWFIMLTYLFMLAWLGVTAFT). Topologically, residues 149–213 (SLPVYMYFNL…STELNMTFHL (65 aa)) are extracellular. An N-linked (GlcNAc...) asparagine glycan is attached at asparagine 164. Cysteine 174 and cysteine 192 are joined by a disulfide. Asparagine 208 is a glycosylation site (N-linked (GlcNAc...) asparagine). A helical transmembrane segment spans residues 214 to 234 (FIVALAGAGAAVIAMVHYLMV). Over 235-278 (LSANWAYVKDACRMQKYEDIKSKEEQELHDIHSTRSKERLNAYT) the chain is Cytoplasmic. Serine 256 is modified (phosphoserine). The residue at position 278 (threonine 278) is a Phosphothreonine.

This sequence belongs to the myelin proteolipid protein family. As to quaternary structure, interacts with OPRM1. Interacts with palmitoyltransferase ZDHHC17/HIP14; the interaction leads to palmitoylation of GPM6A. Post-translationally, N-glycosylated. In terms of processing, palmitoylated by ZDHHC17/HIP14.

The protein localises to the cell membrane. It localises to the cell projection. It is found in the axon. Its subcellular location is the growth cone. The protein resides in the dendritic spine. The protein localises to the filopodium. It localises to the neuron projection. In terms of biological role, involved in neuronal differentiation, including differentiation and migration of neuronal stem cells. Plays a role in neuronal plasticity and is involved in neurite and filopodia outgrowth, filopodia motility and probably synapse formation. GPM6A-induced filopodia formation involves mitogen-activated protein kinase (MAPK) and Src signaling pathways. May be involved in neuronal NGF-dependent Ca(2+) influx. May be involved in regulation of endocytosis and intracellular trafficking of G-protein-coupled receptors (GPCRs); may enhance internalization and recycling of mu-type opioid receptor. The chain is Neuronal membrane glycoprotein M6-a (GPM6A) from Bos taurus (Bovine).